A 229-amino-acid polypeptide reads, in one-letter code: Ribonuclease 3 (229 aa).

In terms of domain architecture, RNase III spans 3 to 125; that stretch reads VNALQEKLGY…LIGGIFLDSN (123 aa). Residue Glu-38 participates in Mg(2+) binding. Asp-42 is a catalytic residue. Asn-111 and Glu-114 together coordinate Mg(2+). The active site involves Glu-114. The DRBM domain maps to 155 to 225; sequence DPKTRLQEYM…AAKVLEALEH (71 aa).

The protein belongs to the ribonuclease III family. As to quaternary structure, homodimer. Requires Mg(2+) as cofactor.

Its subcellular location is the cytoplasm. It catalyses the reaction Endonucleolytic cleavage to 5'-phosphomonoester.. Digests double-stranded RNA. Involved in the processing of primary rRNA transcript to yield the immediate precursors to the large and small rRNAs (23S and 16S). Processes some mRNAs, and tRNAs when they are encoded in the rRNA operon. Processes pre-crRNA and tracrRNA of type II CRISPR loci if present in the organism. This chain is Ribonuclease 3, found in Blochmanniella pennsylvanica (strain BPEN).